A 1036-amino-acid polypeptide reads, in one-letter code: Isoleucine--tRNA ligase (1036 aa).

A 'HIGH' region motif is present at residues 46-56 (PFATGLPHYGH). Residues 589–593 (KMSKR) carry the 'KMSKS' region motif. Residue K592 participates in ATP binding.

It belongs to the class-I aminoacyl-tRNA synthetase family. IleS type 2 subfamily. In terms of assembly, monomer. The cofactor is Zn(2+).

The protein resides in the cytoplasm. It catalyses the reaction tRNA(Ile) + L-isoleucine + ATP = L-isoleucyl-tRNA(Ile) + AMP + diphosphate. In terms of biological role, catalyzes the attachment of isoleucine to tRNA(Ile). As IleRS can inadvertently accommodate and process structurally similar amino acids such as valine, to avoid such errors it has two additional distinct tRNA(Ile)-dependent editing activities. One activity is designated as 'pretransfer' editing and involves the hydrolysis of activated Val-AMP. The other activity is designated 'posttransfer' editing and involves deacylation of mischarged Val-tRNA(Ile). The chain is Isoleucine--tRNA ligase from Chlamydia trachomatis serovar A (strain ATCC VR-571B / DSM 19440 / HAR-13).